The primary structure comprises 145 residues: Large ribosomal subunit protein uL13 (145 aa).

The protein belongs to the universal ribosomal protein uL13 family. In terms of assembly, part of the 50S ribosomal subunit.

Its function is as follows. This protein is one of the early assembly proteins of the 50S ribosomal subunit, although it is not seen to bind rRNA by itself. It is important during the early stages of 50S assembly. This is Large ribosomal subunit protein uL13 from Bacillus licheniformis (strain ATCC 14580 / DSM 13 / JCM 2505 / CCUG 7422 / NBRC 12200 / NCIMB 9375 / NCTC 10341 / NRRL NRS-1264 / Gibson 46).